A 551-amino-acid chain; its full sequence is Interleukin-2 receptor subunit beta (551 aa).

A signal peptide spans 1–26 (MAAPALSWRLPLLILLLPLATSWASA). Residues 27 to 240 (AVNGTSQFTC…TKPAALGKDT (214 aa)) lie on the Extracellular side of the membrane. 3 N-linked (GlcNAc...) asparagine glycosylation sites follow: Asn29, Asn43, and Asn71. Intrachain disulfides connect Cys36/Cys46, Cys59/Cys110, and Cys74/Cys86. The 101-residue stretch at 134–234 (APISLQVVHV…QPLAFRTKPA (101 aa)) folds into the Fibronectin type-III domain. The N-linked (GlcNAc...) asparagine glycan is linked to Asn149. Positions 220–224 (WSPWS) match the WSXWS motif motif. The helical transmembrane segment at 241-265 (IPWLGHLLVGLSGAFGFIILVYLLI) threads the bilayer. Residues 266-551 (NCRNTGPWLK…LQGQDPTHLV (286 aa)) are Cytoplasmic-facing. The Box 1 motif motif lies at 278–286 (LKCNTPDPS). 2 disordered regions span residues 389 to 416 (EEDP…GEDD) and 432 to 486 (PSLL…VDFQ).

Belongs to the type I cytokine receptor family. Type 4 subfamily. As to quaternary structure, non-covalent dimer of an alpha and a beta subunit. IL2R exists in 3 different forms: a high affinity dimer, an intermediate affinity monomer (beta subunit), and a low affinity monomer (alpha subunit). The high and intermediate affinity forms also associate with a gamma subunit. Interacts with SHB upon interleukin stimulation. In terms of assembly, (Microbial infection) Interacts with HTLV-1 accessory protein p12I.

The protein resides in the cell membrane. Its function is as follows. Receptor for interleukin-2. This beta subunit is involved in receptor mediated endocytosis and transduces the mitogenic signals of IL2. Probably in association with IL15RA, involved in the stimulation of neutrophil phagocytosis by IL15. The protein is Interleukin-2 receptor subunit beta of Homo sapiens (Human).